Consider the following 202-residue polypeptide: Outer-membrane lipoprotein carrier protein (202 aa).

The N-terminal stretch at 1–18 is a signal peptide; that stretch reads MNKLFLILLLIFSHEVFS.

This sequence belongs to the LolA family. As to quaternary structure, monomer.

It is found in the periplasm. Its function is as follows. Participates in the translocation of lipoproteins from the inner membrane to the outer membrane. Only forms a complex with a lipoprotein if the residue after the N-terminal Cys is not an aspartate (The Asp acts as a targeting signal to indicate that the lipoprotein should stay in the inner membrane). This is Outer-membrane lipoprotein carrier protein from Legionella pneumophila (strain Paris).